The chain runs to 108 residues: MQLSPQEKDKLMIFTAALLAEKRKEKGIKLNYPEAVAYISAAILEGAREGKTVAELMSYGRTVLNQNEVMEGISEMIEEVQVEATFPDGTKLVTVHNPIIIKENDLAE.

It belongs to the urease gamma subunit family. As to quaternary structure, heterotrimer of UreA (gamma), UreB (beta) and UreC (alpha) subunits. Three heterotrimers associate to form the active enzyme.

The protein localises to the cytoplasm. The catalysed reaction is urea + 2 H2O + H(+) = hydrogencarbonate + 2 NH4(+). It participates in nitrogen metabolism; urea degradation; CO(2) and NH(3) from urea (urease route): step 1/1. This chain is Urease subunit gamma, found in Trichodesmium erythraeum (strain IMS101).